The chain runs to 357 residues: U3 small nucleolar ribonucleoprotein protein LCP5 (357 aa).

Ser2 carries the N-acetylserine modification. Disordered stretches follow at residues 146-211 (STLV…YKPP) and 301-357 (NKAE…QRRL). Over residues 155 to 166 (DDSEDDESSEDE) the composition is skewed to acidic residues. The segment covering 171 to 183 (PNTSGIINTNKKS) has biased composition (polar residues). 2 stretches are compositionally biased toward basic and acidic residues: residues 187–196 (RVEETAKQEN) and 348–357 (SAWDRAQRRL).

The protein localises to the nucleus. It localises to the nucleolus. Functionally, component of the U3 small nucleolar ribonucleoprotein. Required for the early cleavages at sites A0, A1 and A2 of the pre-ribosomal RNA. Participates in ribosome biogenesis. The polypeptide is U3 small nucleolar ribonucleoprotein protein LCP5 (LCP5) (Saccharomyces cerevisiae (strain ATCC 204508 / S288c) (Baker's yeast)).